The chain runs to 86 residues: NADH-ubiquinone oxidoreductase chain 4L (86 aa).

The next 2 membrane-spanning stretches (helical) occupy residues Leu22–Tyr42 and Phe52–Leu72.

The protein belongs to the complex I subunit 4L family.

Its subcellular location is the mitochondrion membrane. It catalyses the reaction a ubiquinone + NADH + 5 H(+)(in) = a ubiquinol + NAD(+) + 4 H(+)(out). In terms of biological role, core subunit of the mitochondrial membrane respiratory chain NADH dehydrogenase (Complex I) that is believed to belong to the minimal assembly required for catalysis. Complex I functions in the transfer of electrons from NADH to the respiratory chain. The immediate electron acceptor for the enzyme is believed to be ubiquinone. The polypeptide is NADH-ubiquinone oxidoreductase chain 4L (ND4L) (Artemia salina (Brine shrimp)).